Consider the following 254-residue polypeptide: Zinc import ATP-binding protein ZnuC (254 aa).

Residues 5–221 (ICAADLSVSH…PAYRALFGSE (217 aa)) enclose the ABC transporter domain. An ATP-binding site is contributed by 38 to 45 (GPNGSGKS). Positions 234 to 245 (DHDHDHVAEGHR) are enriched in basic and acidic residues. The interval 234–254 (DHDHDHVAEGHRHGPACAHPH) is disordered.

The protein belongs to the ABC transporter superfamily. Zinc importer (TC 3.A.1.15.5) family. The complex is composed of two ATP-binding proteins (ZnuC), two transmembrane proteins (ZnuB) and a solute-binding protein (ZnuA).

It localises to the cell inner membrane. It carries out the reaction Zn(2+)(out) + ATP(in) + H2O(in) = Zn(2+)(in) + ADP(in) + phosphate(in) + H(+)(in). In terms of biological role, part of the ABC transporter complex ZnuABC involved in zinc import. Responsible for energy coupling to the transport system. The chain is Zinc import ATP-binding protein ZnuC from Paracoccus denitrificans (strain Pd 1222).